The following is a 188-amino-acid chain: Kininogen (188 aa).

N-linked (GlcNAc...) asparagine glycosylation is found at Asn-36, Asn-150, and Asn-182.

Bradykinin is released from kininogen by kallikrein. In terms of processing, N-glycosylated. Contains O-acetylated sialic acids as terminal elements on biantennary and triantennary N-glycans.

In terms of biological role, inhibits papain and ficin (cysteine proteinases) but not trypsin (a serine proteinase). This is Kininogen from Anarhichas minor (Arctic spotted wolffish).